Consider the following 502-residue polypeptide: MKYIMFQGTSSNAGKTLTVAALCNLLSRKGYRVTPFKSQNMSLNSYTTVDNDEMSIAQVMQSEAAGIEPNCNMNPILLKPKEDFTSQVIVQGKPAGNMRFDDYQNNFRTQAIKAIEESLEYLKEDYDITVIEGAGSPAEINMYDKDLANMLIARMTDADVILVADIDQGGVFASIVGTYFLIPEEDRKRIKAVIINKFRGNADVLKPGIEKIEELTNIPVIGIIPYDETLNLPEEDSASLSTHHFSENEKITIGTLRLPRISNFTDIDPLDYEEDIGIKLVSIYDDLEDLDALIIPGTRNTVNDLVELKKSGAFDKIKKISKEIPIFGICGGYQMLSNNIIDESCSESKYGSVEGLGLLDMTTEFGQIEKVVQQSEGTIIKDSSLGFEKDTKVTGYELHEGITILGDVEPLIKIKKGQGNDESGLYDGAINGNVCGTYFHGIFHNFEFRRKFTDQLRINKGLKPLGLTKDDFKESKRVNYDQLGDLFANNVDMSFFKDLLRD.

The region spanning 250–448 (KITIGTLRLP…FHGIFHNFEF (199 aa)) is the GATase cobBQ-type domain. Cys330 (nucleophile) is an active-site residue. Residue His440 is part of the active site.

This sequence belongs to the CobB/CobQ family. CobQ subfamily.

Its pathway is cofactor biosynthesis; adenosylcobalamin biosynthesis. In terms of biological role, catalyzes amidations at positions B, D, E, and G on adenosylcobyrinic A,C-diamide. NH(2) groups are provided by glutamine, and one molecule of ATP is hydrogenolyzed for each amidation. This is Probable cobyric acid synthase from Methanosphaera stadtmanae (strain ATCC 43021 / DSM 3091 / JCM 11832 / MCB-3).